We begin with the raw amino-acid sequence, 211 residues long: Protein-lysine N-methyltransferase DDB_G0272708 (211 aa).

The protein belongs to the class I-like SAM-binding methyltransferase superfamily. EFM5 family.

It localises to the cytoplasm. S-adenosyl-L-methionine-dependent protein-lysine N-methyltransferase that methylates elongation factor 1-alpha. This chain is Protein-lysine N-methyltransferase DDB_G0272708, found in Dictyostelium discoideum (Social amoeba).